The sequence spans 548 residues: Ran-binding protein 9 (548 aa).

Over residues 1–14 (MSSPPLHGLSSGGH) the composition is skewed to low complexity. A disordered region spans residues 1 to 26 (MSSPPLHGLSSGGHLSRDPPPRSWSP). The B30.2/SPRY domain occupies 2–189 (SSPPLHGLSS…VDANFGQSPF (188 aa)). Residues 15-26 (LSRDPPPRSWSP) are compositionally biased toward basic and acidic residues. The LisH domain occupies 217–249 (WQSMIQRMVSSYLVHHGYCSTAEAFAKSTDQTV). Positions 255–312 (SIKNRQRIQKLVLSGRMGEAIETTQQLYPSLLERNPNLLFTLKVRQFIEMVNGTDSEV) constitute a CTLH domain.

It belongs to the RANBP9/10 family. As to quaternary structure, identified in the CTLH complex that contains at least MAEA, RMND5A (or alternatively its paralog RMND5B), GID8, WDR26, and RANBP9 and/or RANBP10.

It is found in the cytoplasm. The protein resides in the cell membrane. Its subcellular location is the nucleus. Its function is as follows. May act as scaffolding protein, and as adapter protein to couple membrane receptors to intracellular signaling pathways. Acts as a mediator of cell spreading and actin cytoskeleton rearrangement. Core component of the CTLH E3 ubiquitin-protein ligase complex that mediates ubiquitination and subsequent proteasomal degradation of target proteins. This is Ran-binding protein 9 (ranbp9) from Xenopus tropicalis (Western clawed frog).